The sequence spans 137 residues: Acidic phospholipase A2 CC-PLA2-1 (137 aa).

Positions 1–16 are cleaved as a signal peptide; it reads MRTLWIVAVWLMGVEG. Intrachain disulfides connect cysteine 42–cysteine 130, cysteine 44–cysteine 60, cysteine 59–cysteine 110, cysteine 65–cysteine 137, cysteine 66–cysteine 103, cysteine 73–cysteine 96, and cysteine 90–cysteine 101. Tyrosine 43, glycine 45, and glycine 47 together coordinate Ca(2+). Residue histidine 63 is part of the active site. Aspartate 64 lines the Ca(2+) pocket. Residue aspartate 104 is part of the active site.

This sequence belongs to the phospholipase A2 family. Group II subfamily. D49 sub-subfamily. Requires Ca(2+) as cofactor. Glycosylated (2.5%). In terms of tissue distribution, expressed by the venom gland.

It localises to the secreted. It catalyses the reaction a 1,2-diacyl-sn-glycero-3-phosphocholine + H2O = a 1-acyl-sn-glycero-3-phosphocholine + a fatty acid + H(+). In terms of biological role, snake venom phospholipase A2 (PLA2) that inhibits blood coagulation and platelet aggregation induced by ADP and arachidonic acid. Inhibits tumor cell adhesion and migration in a dose-dependent manner. Abolishes the attachment of human brain microvascular endothelial cells (HBMEC) to fibrinogen (IC(50)=0.12 uM) and dramatically reduces its adhesion to fibronectin (IC(50)=0.12 uM), whereas no effect is observed on type I collagen, vitronectin or laminin 1. Also blocks the cell migration toward fibronectin and fibrinogen. These effects are not dependent of the catalytic activity, but are mediated by alpha-5/beta-1 (ITGA5/ITGB1) and alpha-v-containing (ITGAV) integrins. Also shows anti-angiogenic activity in chicken chorioallantoix membrane assay. Has a relatively high enzymatic activity. PLA2 catalyzes the calcium-dependent hydrolysis of the 2-acyl groups in 3-sn-phosphoglycerides. This chain is Acidic phospholipase A2 CC-PLA2-1, found in Cerastes cerastes (Horned desert viper).